Consider the following 246-residue polypeptide: MTSSVSRPSGRRADELRKVALTRHYTKHAEGSVLVEFGDTKVLCTASVAERVPEFLRERGQGWLTAEYGMLPRATHTRSDREAARGKQTGRTQEIQRLIGRALRAVFDLEALGPRTLHIDCDVIQADGGTRTASITGAFVAAHDAVSTLIAAGKLTRSPITDHVAAISVGVYEGAPVLDLDYAEDSRCDTDMNVVMTGAGGFVEVQGTAEGVPFSRAEMNALLDLAQGGIAELVQLQKDVLGASHA.

Residues arginine 91 and 129-131 contribute to the phosphate site; that span reads GTR.

It belongs to the RNase PH family. As to quaternary structure, homohexameric ring arranged as a trimer of dimers.

It carries out the reaction tRNA(n+1) + phosphate = tRNA(n) + a ribonucleoside 5'-diphosphate. Functionally, phosphorolytic 3'-5' exoribonuclease that plays an important role in tRNA 3'-end maturation. Removes nucleotide residues following the 3'-CCA terminus of tRNAs; can also add nucleotides to the ends of RNA molecules by using nucleoside diphosphates as substrates, but this may not be physiologically important. Probably plays a role in initiation of 16S rRNA degradation (leading to ribosome degradation) during starvation. The protein is Ribonuclease PH of Burkholderia cenocepacia (strain ATCC BAA-245 / DSM 16553 / LMG 16656 / NCTC 13227 / J2315 / CF5610) (Burkholderia cepacia (strain J2315)).